The following is an 82-amino-acid chain: Capsid protein G8P (82 aa).

The N-terminal stretch at 1–28 (MKAMKQRIAKFSPVASFRNLCIAGSVTA) is a signal peptide. Residues 29–57 (ATSLPAFAGVIDTSAVESAITDGQGDMKA) are Periplasmic-facing. A helical transmembrane segment spans residues 58-78 (IGGYIVGALVILAVAGLIYSM). At 79–82 (LRKA) the chain is on the cytoplasmic side.

It belongs to the inovirus capsid protein family. In terms of assembly, homomultimerizes. There are several thousands of this protein in the phage capsid.

It is found in the virion. The protein localises to the host membrane. Its function is as follows. Self assembles to form a helical capsid wrapping up the viral genomic DNA. The capsid displays a filamentous structure with a length of 760-1950 nm and a width of 6-8 nm. The virion assembly and budding take place at the host inner membrane. The chain is Capsid protein G8P (VIII) from Pseudomonas phage Pf1 (Bacteriophage Pf1).